The sequence spans 119 residues: Large ribosomal subunit protein bL20 (119 aa).

It belongs to the bacterial ribosomal protein bL20 family.

Binds directly to 23S ribosomal RNA and is necessary for the in vitro assembly process of the 50S ribosomal subunit. It is not involved in the protein synthesizing functions of that subunit. This is Large ribosomal subunit protein bL20 from Syntrophus aciditrophicus (strain SB).